A 418-amino-acid chain; its full sequence is UDP-N-acetylglucosamine 1-carboxyvinyltransferase (418 aa).

22 to 23 (KN) serves as a coordination point for phosphoenolpyruvate. Residue Arg91 coordinates UDP-N-acetyl-alpha-D-glucosamine. Cys115 functions as the Proton donor in the catalytic mechanism. At Cys115 the chain carries 2-(S-cysteinyl)pyruvic acid O-phosphothioketal. 2 residues coordinate UDP-N-acetyl-alpha-D-glucosamine: Asp303 and Ile325.

This sequence belongs to the EPSP synthase family. MurA subfamily.

The protein localises to the cytoplasm. The enzyme catalyses phosphoenolpyruvate + UDP-N-acetyl-alpha-D-glucosamine = UDP-N-acetyl-3-O-(1-carboxyvinyl)-alpha-D-glucosamine + phosphate. Its pathway is cell wall biogenesis; peptidoglycan biosynthesis. In terms of biological role, cell wall formation. Adds enolpyruvyl to UDP-N-acetylglucosamine. This is UDP-N-acetylglucosamine 1-carboxyvinyltransferase from Syntrophobacter fumaroxidans (strain DSM 10017 / MPOB).